A 98-amino-acid polypeptide reads, in one-letter code: Acylphosphatase (98 aa).

Residues T12–H98 form the Acylphosphatase-like domain. Active-site residues include R27 and N45.

The protein belongs to the acylphosphatase family.

The enzyme catalyses an acyl phosphate + H2O = a carboxylate + phosphate + H(+). The chain is Acylphosphatase (acyP) from Burkholderia mallei (strain NCTC 10247).